A 260-amino-acid polypeptide reads, in one-letter code: Intermembrane phospholipid transport system permease protein MlaE (260 aa).

Over 1 to 50 the chain is Cytoplasmic; sequence MLLNALASLGHKGIKTLRTFGRAGLMLFNALVGKPEFRKHAPLLVRQLYN. The chain crosses the membrane as a helical span at residues 51 to 71; that stretch reads VGVLSMLIIVVSGVFIGMVLG. The Periplasmic segment spans residues 72–88; it reads LQGYLVLTTYSAETSLG. The chain crosses the membrane as a helical span at residues 89-109; the sequence is MLVALSLLRELGPVVAALLFA. Over 110–147 the chain is Cytoplasmic; it reads GRAGSALTAEIGLMRATEQLSSMEMMAVDPLRRVISPR. A helical transmembrane segment spans residues 148–168; the sequence is FWAGVISLPLLTVIFVAVGIW. The Periplasmic portion of the chain corresponds to 169–198; it reads GGSLVGVSWKGIDSGFFWSAMQNAVDWRMD. The chain crosses the membrane as a helical span at residues 199–219; the sequence is LVNCLIKSVVFAITVTWISLF. The Cytoplasmic segment spans residues 220–238; the sequence is NGYDAIPTSAGISRATTRT. Residues 239-259 traverse the membrane as a helical segment; it reads VVHSSLAVLGLDFVLTALMFG. Asn260 is a topological domain (periplasmic).

This sequence belongs to the MlaE permease family. In terms of assembly, the complex is composed of two ATP-binding proteins (MlaF), two transmembrane proteins (MlaE), two cytoplasmic solute-binding proteins (MlaB) and six periplasmic solute-binding proteins (MlaD).

The protein localises to the cell inner membrane. Part of the ABC transporter complex MlaFEDB, which is involved in a phospholipid transport pathway that maintains lipid asymmetry in the outer membrane by retrograde trafficking of phospholipids from the outer membrane to the inner membrane. Probably responsible for the translocation of the substrate across the membrane. This is Intermembrane phospholipid transport system permease protein MlaE from Escherichia coli O157:H7.